The following is a 147-amino-acid chain: MSQGQGGITLDELIAQADYLKRYIDSLQRTQLELLESINSIDSAKQAIETMKSGNKEMLVFIDRKGYLLAKVGGIIGDKVTVHLGLSYYAEVDLDSAIKILDKRKDEISKAAQDLNNELQKAASTYNQIVDILNQIQQAAARRQQGE.

This sequence belongs to the prefoldin subunit alpha family. As to quaternary structure, heterohexamer of two alpha and four beta subunits.

The protein localises to the cytoplasm. Functionally, molecular chaperone capable of stabilizing a range of proteins. Seems to fulfill an ATP-independent, HSP70-like function in archaeal de novo protein folding. This Saccharolobus solfataricus (strain ATCC 35092 / DSM 1617 / JCM 11322 / P2) (Sulfolobus solfataricus) protein is Prefoldin subunit alpha (pfdA).